The sequence spans 310 residues: Probable L,D-transpeptidase ErfK/SrfK (310 aa).

Positions 1–21 (MRRVNILCSFALLFASHTSLA) are cleaved as a signal peptide. The region spanning 96–231 (KGIVVNVAEM…VPVGTRVQII (136 aa)) is the L,D-TPase catalytic domain. His191 functions as the Proton donor/acceptor in the catalytic mechanism. Catalysis depends on Cys207, which acts as the Nucleophile.

This sequence belongs to the YkuD family. In terms of assembly, interacts with DsbG.

Its subcellular location is the periplasm. The protein operates within cell wall biogenesis; peptidoglycan biosynthesis. Functionally, responsible, at least in part, for anchoring of the major outer membrane lipoprotein (Lpp, also known as the Braun lipoprotein) to the peptidoglycan via a meso-diaminopimelyl-L-Lys- bond on the terminal residue of Lpp. The polypeptide is Probable L,D-transpeptidase ErfK/SrfK (erfK) (Escherichia coli (strain K12)).